The following is a 795-amino-acid chain: Lon protease (795 aa).

The Lon N-terminal domain occupies 7 to 213; sequence PQILVVRNQV…KIIGSGIEDL (207 aa). Residue 379–386 participates in ATP binding; it reads GPPGVGKS. The Lon proteolytic domain maps to 615–795; it reads DALPGIVNGM…YKDIYNKIFN (181 aa). Active-site residues include S702 and K745.

Belongs to the peptidase S16 family. Homohexamer. Organized in a ring with a central cavity.

Its subcellular location is the cytoplasm. The enzyme catalyses Hydrolysis of proteins in presence of ATP.. ATP-dependent serine protease that mediates the selective degradation of mutant and abnormal proteins as well as certain short-lived regulatory proteins. Required for cellular homeostasis and for survival from DNA damage and developmental changes induced by stress. Degrades polypeptides processively to yield small peptide fragments that are 5 to 10 amino acids long. Binds to DNA in a double-stranded, site-specific manner. This chain is Lon protease, found in Mycoplasma pneumoniae (strain ATCC 29342 / M129 / Subtype 1) (Mycoplasmoides pneumoniae).